We begin with the raw amino-acid sequence, 747 residues long: UPF0313 protein PA4928 (747 aa).

One can recognise a Radical SAM core domain in the interval 371 to 640 (AYEMIRFSVN…KSDQQRRLHK (270 aa)). Positions 385, 389, and 392 each coordinate [4Fe-4S] cluster. The tract at residues 670–747 (GKHHLVPTYQ…KKSRQPNIPR (78 aa)) is disordered.

It belongs to the UPF0313 family. [4Fe-4S] cluster serves as cofactor.

The polypeptide is UPF0313 protein PA4928 (Pseudomonas aeruginosa (strain ATCC 15692 / DSM 22644 / CIP 104116 / JCM 14847 / LMG 12228 / 1C / PRS 101 / PAO1)).